Consider the following 212-residue polypeptide: Acyl-homoserine-lactone synthase (212 aa).

This sequence belongs to the autoinducer synthase family.

It catalyses the reaction a fatty acyl-[ACP] + S-adenosyl-L-methionine = an N-acyl-L-homoserine lactone + S-methyl-5'-thioadenosine + holo-[ACP] + H(+). Required for the synthesis of OHHL (N-(3-oxohexanoyl)-L-homoserine lactone), an autoinducer molecule which binds to TraR and thus acts in the control of conjugal transfer. The chain is Acyl-homoserine-lactone synthase (traI) from Rhizobium radiobacter (Agrobacterium tumefaciens).